The chain runs to 583 residues: Penicillin-binding protein activator LpoA (583 aa).

The signal sequence occupies residues 1 to 24 (MATILKQKLKTFFVPTAITLLLSA). A lipid anchor (N-palmitoyl cysteine) is attached at Cys25. Cys25 carries the S-diacylglycerol cysteine lipid modification.

It belongs to the LpoA family. In terms of assembly, interacts with PBP1a.

The protein resides in the cell outer membrane. Its function is as follows. Regulator of peptidoglycan synthesis that is essential for the function of penicillin-binding protein 1A (PBP1a). This chain is Penicillin-binding protein activator LpoA, found in Haemophilus ducreyi (strain 35000HP / ATCC 700724).